The following is a 283-amino-acid chain: Pantothenate synthetase (283 aa).

ATP is bound at residue 30-37 (MGNLHAGH). Histidine 37 (proton donor) is an active-site residue. Glutamine 61 contributes to the (R)-pantoate binding site. Glutamine 61 lines the beta-alanine pocket. 149 to 152 (GEKD) contributes to the ATP binding site. Glutamine 155 is a binding site for (R)-pantoate. ATP is bound by residues valine 178 and 186–189 (LSSR).

Belongs to the pantothenate synthetase family. As to quaternary structure, homodimer.

It localises to the cytoplasm. The catalysed reaction is (R)-pantoate + beta-alanine + ATP = (R)-pantothenate + AMP + diphosphate + H(+). The protein operates within cofactor biosynthesis; (R)-pantothenate biosynthesis; (R)-pantothenate from (R)-pantoate and beta-alanine: step 1/1. Catalyzes the condensation of pantoate with beta-alanine in an ATP-dependent reaction via a pantoyl-adenylate intermediate. The polypeptide is Pantothenate synthetase (Pseudomonas paraeruginosa (strain DSM 24068 / PA7) (Pseudomonas aeruginosa (strain PA7))).